The following is a 280-amino-acid chain: ESX-1 secretion-associated protein EspJ (280 aa).

A Phosphoserine modification is found at serine 70. Low complexity-rich tracts occupy residues 167-181 (QTIS…QSAQ) and 246-280 (PAQA…TTTL). The segment at 167 to 280 (QTISQTAQQA…TPAPSTTTTL (114 aa)) is disordered.

Phosphorylated at Ser-70.

It localises to the secreted. Its function is as follows. Could be involved in regulation of growth and intracellular survival. This chain is ESX-1 secretion-associated protein EspJ, found in Mycobacterium tuberculosis (strain CDC 1551 / Oshkosh).